Consider the following 856-residue polypeptide: MDISKGLPGMQGGLHIWISENRKMVPVPEGAYGNFFEEHCYVILHVPQSPKATQGASSDLHYWVGKQAGAEAQGAAEAFQQRLQDELGGQTVLHREAQGHESDCFCSYFRPGIIYRKGGLASDLKHVETNLFNIQRLLHIKGRKHVSATEVELSWNSFNKGDIFLLDLGKMMIQWNGPKTSISEKARGLALTYSLRDRERGGGRAQIGVVDDEAKAPDLMQIMEAVLGRRVGSLRAATPSKDINQLQKANVRLYHVYEKGKDLVVLELATPPLTQDLLQEEDFYILDQGGFKIYVWQGRMSSLQERKAAFSRAVGFIQAKGYPTYTNVEVVNDGAESAAFKQLFRTWSEKRRRNQKLGGRDKSIHVKLDVGKLHTQPKLAAQLRMVDDGSGKVEVWCIQDLHRQPVDPKRHGQLCAGNCYLVLYTYQRLGRVQYILYLWQGHQATADEIEALNSNAEELDVMYGGVLVQEHVTMGSEPPHFLAIFQGQLVIFQERAGHHGKGQSASTTRLFQVQGTDSHNTRTMEVPARASSLNSSDIFLLVTASVCYLWFGKGCNGDQREMARVVVTVISRKNEETVLEGQEPPHFWEALGGRAPYPSNKRLPEEVPSFQPRLFECSSHMGCLVLAEVGFFSQEDLDKYDIMLLDTWQEIFLWLGEAASEWKEAVAWGQEYLKTHPAGRSPATPIVLVKQGHEPPTFIGWFFTWDPYKWTSHPSHKEVVDGSPAAASTISEITAEVNNLRLSRWPGNGRAGAVALQALKGSQDSSENDLVRSPKSAGSRTSSSVSSTSATINGGLRREQLMHQAVEDLPEGVDPARREFYLSDSDFQDIFGKSKEEFYSMATWRQRQEKKQLGFF.

Gelsolin-like repeat units lie at residues 22-74 (RKMV…EAQG), 146-186 (VSAT…SEKA), 263-307 (LVVL…QERK), 401-450 (LHRQ…DEIE), 521-561 (TRTM…DQRE), and 624-665 (LVLA…WKEA). Residues 762–796 (SQDSSENDLVRSPKSAGSRTSSSVSSTSATINGGL) form a disordered region. A compositionally biased stretch (low complexity) spans 776–791 (SAGSRTSSSVSSTSAT). Residues 790–856 (ATINGGLRRE…RQEKKQLGFF (67 aa)) form the HP domain.

Belongs to the villin/gelsolin family. In terms of tissue distribution, ubiquitously expressed in 16 tissues examined.

Possible tumor suppressor. This is Villin-like protein (VILL) from Homo sapiens (Human).